Consider the following 230-residue polypeptide: Protein STK_02290 (230 aa).

An AMMECR1 domain is found at 15–213 (NLGKVLIKIA…EEKPKSEKIL (199 aa)).

The chain is Protein STK_02290 from Sulfurisphaera tokodaii (strain DSM 16993 / JCM 10545 / NBRC 100140 / 7) (Sulfolobus tokodaii).